Consider the following 467-residue polypeptide: Glycine--tRNA ligase (467 aa).

Arg-100 and Glu-175 together coordinate substrate. Residues 207 to 209, 217 to 222, 291 to 292, and 335 to 338 contribute to the ATP site; these read RNE, FRTREF, EL, and GADR. 222–226 contributes to the substrate binding site; that stretch reads FEQME. Residue 331–335 coordinates substrate; that stretch reads EPSLG.

Belongs to the class-II aminoacyl-tRNA synthetase family. In terms of assembly, homodimer.

It localises to the cytoplasm. The catalysed reaction is tRNA(Gly) + glycine + ATP = glycyl-tRNA(Gly) + AMP + diphosphate. Functionally, catalyzes the attachment of glycine to tRNA(Gly). This Clostridium perfringens (strain 13 / Type A) protein is Glycine--tRNA ligase.